Reading from the N-terminus, the 554-residue chain is Protein SINE2 (554 aa).

The tract at residues 17-290 is ARMADILLO-type fold; it reads DKDPDSHKTA…MAAHETMRQA (274 aa). Disordered regions lie at residues 306 to 332, 411 to 442, and 465 to 487; these read CKPR…VYSR, NESV…KHHR, and ETSS…TTED. The segment covering 311 to 321 has biased composition (low complexity); sequence SLSGSVKSTSS. A compositionally biased stretch (basic and acidic residues) spans 322–332; sequence LREHDGSVYSR. A compositionally biased stretch (basic residues) spans 419–431; that stretch reads NRSRSSRRNTKKR. The span at 465–485 shows a compositional bias: low complexity; it reads ETSSSSSIYDTSGTTTPTNTT. Residues 509 to 554 enclose the KASH domain; sequence LDPRLGRSKGVLKLGLSVFSIAVAGFASFMWMYLQDDMMPPHLVPT. The helical transmembrane segment at 522–542 threads the bilayer; sequence LGLSVFSIAVAGFASFMWMYL. Positions 551 to 554 match the Required for nuclear localization motif; it reads LVPT.

As to quaternary structure, interacts with SUN1 and SUN2. Expressed in epidermal cells, mesophyll cells, trichomes and root cells.

Its subcellular location is the nucleus membrane. Plays a role in innate immunity against the oomycete pathogen A.arabidopsidis (Hpa). This Arabidopsis thaliana (Mouse-ear cress) protein is Protein SINE2.